The following is a 478-amino-acid chain: Poly(A) RNA polymerase cid11 (478 aa).

Residues Asp106 and Asp108 each coordinate Mg(2+). In terms of domain architecture, PAP-associated spans 263–317 (SLGRLLIDFFYYYGFSFNYLDSVVSVRSGTVLNKQEKGWAMEVNNSLCVEEPFNT). Residues 428–447 (QSYENKANRDSDFQGQTSLT) form a disordered region.

This sequence belongs to the DNA polymerase type-B-like family. The cofactor is Mg(2+). Mn(2+) serves as cofactor.

It is found in the cytoplasm. The protein resides in the nucleus. It catalyses the reaction RNA(n) + ATP = RNA(n)-3'-adenine ribonucleotide + diphosphate. The sequence is that of Poly(A) RNA polymerase cid11 (cid11) from Schizosaccharomyces pombe (strain 972 / ATCC 24843) (Fission yeast).